A 423-amino-acid polypeptide reads, in one-letter code: tRNA(Ile)-lysidine synthase (423 aa).

27–32 (SGGVDS) serves as a coordination point for ATP.

It belongs to the tRNA(Ile)-lysidine synthase family.

The protein resides in the cytoplasm. The catalysed reaction is cytidine(34) in tRNA(Ile2) + L-lysine + ATP = lysidine(34) in tRNA(Ile2) + AMP + diphosphate + H(+). Its function is as follows. Ligates lysine onto the cytidine present at position 34 of the AUA codon-specific tRNA(Ile) that contains the anticodon CAU, in an ATP-dependent manner. Cytidine is converted to lysidine, thus changing the amino acid specificity of the tRNA from methionine to isoleucine. In Streptococcus mutans serotype c (strain ATCC 700610 / UA159), this protein is tRNA(Ile)-lysidine synthase.